The sequence spans 367 residues: Succinyl-diaminopimelate desuccinylase (367 aa).

Residue His-67 coordinates Zn(2+). Residue Asp-69 is part of the active site. Asp-98 contributes to the Zn(2+) binding site. The active-site Proton acceptor is Glu-128. Residues Glu-129, Glu-157, and His-342 each coordinate Zn(2+).

Belongs to the peptidase M20A family. DapE subfamily. Homodimer. Requires Zn(2+) as cofactor. It depends on Co(2+) as a cofactor.

The enzyme catalyses N-succinyl-(2S,6S)-2,6-diaminopimelate + H2O = (2S,6S)-2,6-diaminopimelate + succinate. It functions in the pathway amino-acid biosynthesis; L-lysine biosynthesis via DAP pathway; LL-2,6-diaminopimelate from (S)-tetrahydrodipicolinate (succinylase route): step 3/3. Its function is as follows. Catalyzes the hydrolysis of N-succinyl-L,L-diaminopimelic acid (SDAP), forming succinate and LL-2,6-diaminopimelate (DAP), an intermediate involved in the bacterial biosynthesis of lysine and meso-diaminopimelic acid, an essential component of bacterial cell walls. The sequence is that of Succinyl-diaminopimelate desuccinylase from Campylobacter hominis (strain ATCC BAA-381 / DSM 21671 / CCUG 45161 / LMG 19568 / NCTC 13146 / CH001A).